Reading from the N-terminus, the 122-residue chain is Small ribosomal subunit protein uS13 (122 aa).

Residues 95–122 (GLPVRGQRTKTNARTRKGPKKTIAGKKK) form a disordered region.

It belongs to the universal ribosomal protein uS13 family. Part of the 30S ribosomal subunit. Forms a loose heterodimer with protein S19. Forms two bridges to the 50S subunit in the 70S ribosome.

Functionally, located at the top of the head of the 30S subunit, it contacts several helices of the 16S rRNA. In the 70S ribosome it contacts the 23S rRNA (bridge B1a) and protein L5 of the 50S subunit (bridge B1b), connecting the 2 subunits; these bridges are implicated in subunit movement. Contacts the tRNAs in the A and P-sites. In Corynebacterium glutamicum (strain ATCC 13032 / DSM 20300 / JCM 1318 / BCRC 11384 / CCUG 27702 / LMG 3730 / NBRC 12168 / NCIMB 10025 / NRRL B-2784 / 534), this protein is Small ribosomal subunit protein uS13.